The following is a 346-amino-acid chain: Methylthioribose-1-phosphate isomerase (346 aa).

Residues 46–48 (RGA), R89, and Q196 each bind substrate. The Proton donor role is filled by D237. 247–248 (NK) lines the substrate pocket.

This sequence belongs to the eIF-2B alpha/beta/delta subunits family. MtnA subfamily.

The enzyme catalyses 5-(methylsulfanyl)-alpha-D-ribose 1-phosphate = 5-(methylsulfanyl)-D-ribulose 1-phosphate. Its pathway is amino-acid biosynthesis; L-methionine biosynthesis via salvage pathway; L-methionine from S-methyl-5-thio-alpha-D-ribose 1-phosphate: step 1/6. Catalyzes the interconversion of methylthioribose-1-phosphate (MTR-1-P) into methylthioribulose-1-phosphate (MTRu-1-P). This chain is Methylthioribose-1-phosphate isomerase, found in Geotalea daltonii (strain DSM 22248 / JCM 15807 / FRC-32) (Geobacter daltonii).